The sequence spans 312 residues: Ribosomal RNA small subunit methyltransferase H (312 aa).

S-adenosyl-L-methionine-binding positions include 32–34 (AGH), aspartate 52, phenylalanine 79, aspartate 100, and glutamine 107.

Belongs to the methyltransferase superfamily. RsmH family.

It is found in the cytoplasm. The enzyme catalyses cytidine(1402) in 16S rRNA + S-adenosyl-L-methionine = N(4)-methylcytidine(1402) in 16S rRNA + S-adenosyl-L-homocysteine + H(+). Functionally, specifically methylates the N4 position of cytidine in position 1402 (C1402) of 16S rRNA. In Listeria monocytogenes serotype 4b (strain CLIP80459), this protein is Ribosomal RNA small subunit methyltransferase H.